Consider the following 76-residue polypeptide: ATP synthase subunit c (76 aa).

A run of 2 helical transmembrane segments spans residues 8-28 (LLAAGLAMGLGAIGPGIGVGI) and 55-75 (VAFAESIAIFALVISIVLIFV).

Belongs to the ATPase C chain family. As to quaternary structure, F-type ATPases have 2 components, F(1) - the catalytic core - and F(0) - the membrane proton channel. F(1) has five subunits: alpha(3), beta(3), gamma(1), delta(1), epsilon(1). F(0) has three main subunits: a(1), b(2) and c(10-14). The alpha and beta chains form an alternating ring which encloses part of the gamma chain. F(1) is attached to F(0) by a central stalk formed by the gamma and epsilon chains, while a peripheral stalk is formed by the delta and b chains.

It localises to the cell membrane. Functionally, f(1)F(0) ATP synthase produces ATP from ADP in the presence of a proton or sodium gradient. F-type ATPases consist of two structural domains, F(1) containing the extramembraneous catalytic core and F(0) containing the membrane proton channel, linked together by a central stalk and a peripheral stalk. During catalysis, ATP synthesis in the catalytic domain of F(1) is coupled via a rotary mechanism of the central stalk subunits to proton translocation. Key component of the F(0) channel; it plays a direct role in translocation across the membrane. A homomeric c-ring of between 10-14 subunits forms the central stalk rotor element with the F(1) delta and epsilon subunits. The polypeptide is ATP synthase subunit c (Dehalococcoides mccartyi (strain ATCC BAA-2266 / KCTC 15142 / 195) (Dehalococcoides ethenogenes (strain 195))).